A 687-amino-acid chain; its full sequence is Chloride channel protein ClC-Kb (687 aa).

At 1–50 the chain is on the cytoplasmic side; that stretch reads MEELVGLREGASKKPVPLQELWGPCPRIRRNIQGGLEWLKERLFRVGEDW. A run of 2 helical transmembrane segments spans residues 51–82 and 91–111; these read YFLVALGVLMALISYAMNFTIGRVVRAHKWLY and LRYLSWTVYPVALLSFSSGFS. Positions 116 to 127 form an intramembrane region, helical; sequence PSSGGSGIPEVK. S121 is a binding site for chloride. The next 2 helical transmembrane spans lie at 141-160 and 161-180; these read IKNFGAKVVGLSCTLATGST and IFLGKLGPFVHLSVMIAAYL. The segment at residues 203–224 is an intramembrane region (helical); sequence AGAAVGVATVFAAPISGVLFSI. The helical transmembrane segment at 236–255 threads the bilayer; that stretch reads YWRGFFAATCGAFMFHLLAV. 4 residues coordinate Ca(2+): E259, E261, D278, and E281. 2 helical membrane passes run 282–310 and 325–342; these read IFFFVALGAICGILSCGYNYSQRTFLFFL and PLYSALAAVVLASITYPP. An intramembrane region (helical) is located at residues 349–360; the sequence is ASRLSMSEHLET. 2 helical membrane-spanning segments follow: residues 400–420 and 421–440; these read GTLVFFLVMKFWMLILATTIP and IPAGYFLPIFIYGAVIGRLF. F426 contributes to the chloride binding site. Positions 464–496 form an intramembrane region, helical; the sequence is GAYALAGAAAFSGAVTHTLSTALLAFEVTGQLV. The chain crosses the membrane as a helical span at residues 500-520; sequence PVLMAVLAANAISQSFQPSFY. At 521 to 687 the chain is on the cytoplasmic side; it reads DGTIIVKKLP…STLTNPPAPK (167 aa). CBS domains are found at residues 551–609 and 626–687; these read MNCA…EPAS and CPTQ…PAPK.

This sequence belongs to the chloride channel (TC 2.A.49) family. CLCNKB subfamily. As to quaternary structure, homodimer. Interacts with BSND. Post-translationally, N-glycosylated. Specifically expressed in the kidney, predominantly in the outer medulla and cortex. All nephron segments expressing BSND also express CLCNK proteins.

Its subcellular location is the basolateral cell membrane. It catalyses the reaction chloride(in) = chloride(out). The enzyme catalyses iodide(out) = iodide(in). It carries out the reaction nitrate(in) = nitrate(out). The catalysed reaction is bromide(in) = bromide(out). In terms of biological role, anion-selective channel permeable to small monovalent anions with ion selectivity for chloride &gt; bromide &gt; nitrate &gt; iodide. Forms a homodimeric channel where each subunit has its own ion conduction pathway. May conduct double-barreled currents controlled by two types of gates, two fast gates that control each subunit independently and a slow common gate that opens and shuts off both subunits simultaneously. Assembles with the regulatory subunit BSND/Barttin for sorting at the basolateral plasma membrane domain and functional switch to the ion conducting state. CLCNKB:BSND channels display mostly a linear current-voltage relationship controlled by common gate. Mediates chloride conductance along nephron segments, namely the thick ascending limb of Henle's loop, convoluted tubule and the collecting duct, contributing to the maintenance of systemic acid-base and electrolyte homeostasis. Conducts chloride currents in the stria vascularis of the inner ear to establish the endocochlear potential necessary for normal hearing. This chain is Chloride channel protein ClC-Kb, found in Mus musculus (Mouse).